The chain runs to 1406 residues: MKDLLKFLKQQNKTKEFDGIKIGLASPEMVRSWSFGEVKKPETINYRTFKPEREGLFCARIFGPIKDYECLCGKYKRLKHRGVICEKCGVEVTQSKVRRDRMGHIELASPVAHIWFLKSLPSRIGLMLDMTLRDIERILYFESFVVVEPGMTDLERRQILLEEEYLDMLEQWGDEFEAVMGAEAIFSLLKQLDLDHEIAEMREELGTTNSETKRKKLTKRLKLVESFHQSSNKPEWMILTVLPVLPPDLRPLVPLDGGRFATSDLNDLYRRVINRNNRLKRLLDLAAPDIIVRNEKRMLQESVDALLDNGRRGRAITGSNKRPLKSLADMIKGKQGRFRQNLLGKRVDYSGRSVITVGPTLRLHQCGLPKKMALELFKPFVYGKLEALGLATTIKAAKKLVDREGGEVWDILEGVIREHPVLLNRAPTLHRLGIQAFEPVLIEGKAIQLHPLVCAAYNADFDGDQMAVHVPLTIEAQLEARTLMMSTNNILSPANGEPIIVPSQDVVLGLYYMTRSKINSLGEDMWFQSAKEAEKAYRAGAVGLQAIVKVRMKQVHIADDKSRTETTNIIETTVGRAILSLIMPEGLPFELVDLPMGKKQISTALNACYRLLGIKHTVIFADQLMYTGFEYATLSGASVCIDDMVIPTTKKTLVEAAEAEVQEIHEQFQAGLVTAGERYNKVIDIWASANEQVAKAMMENLSKDTVVNSKGEEVQQDSFNSVYMMADSGARGSAAQIRQLAGMRGLMAKPDGSIIETPITANFREGLNVLQYFISTHGARKGLADTALKTANSGYLTRRLVDIAQDLVITEKDCGSEDGLLVTPLIQGGDVVEALRERVLGRVVAQDIIKPGTKGEVLIARNVLLDEKLCDLIEEASVDQVWVRSVITCQTDFGACAQCYGRDLARGHMVGQGEAIGVMAAQSIGEPGTQLTMRTFHIGGAASRAASENNIQVKNTGKIKLHNAKFVINSEQKVVVTSRSTELTIIDKLGRTKENHRLPYGAVLEKQDGAEITSGEIIANWDPHTHPIITEVEGTVQFLDFIEGLSITKQADEFTGLSSTVIIDPAQRPNAGKELRPMVKLVDPQGNDLFIPGTDVAAQYALAANAIVSLEDGAKVRVGDAVARIPQESSKTRDITGGLPRVADLFEARTPKDAAILAEVSGTLAFGKETKGKRRLVITQANGEAYEEMVPKWRHLNIFEGEKIEKGEVISDGPESPHDILRLRGISPVANYITNEVQEVYRLQGVKINDKHIEVIVNQMLRKGTITDNGDSAFLVGEQAEVARVVIENRRLVAEGKAIATFDYQLLGITKASLATESFISAASFQETTRVLTEAAVAGKCDQLHGLKENVIVGRLIPAGTGFAHHRARAAAKAAELAPKVEETIVDTGTAEQNLADLLNAVDFGD.

Zn(2+) is bound by residues Cys70, Cys72, Cys85, and Cys88. Residues Asp460, Asp462, and Asp464 each contribute to the Mg(2+) site. Zn(2+) contacts are provided by Cys814, Cys889, Cys896, and Cys899.

Belongs to the RNA polymerase beta' chain family. In terms of assembly, the RNAP catalytic core consists of 2 alpha, 1 beta, 1 beta' and 1 omega subunit. When a sigma factor is associated with the core the holoenzyme is formed, which can initiate transcription. Mg(2+) is required as a cofactor. The cofactor is Zn(2+).

It catalyses the reaction RNA(n) + a ribonucleoside 5'-triphosphate = RNA(n+1) + diphosphate. DNA-dependent RNA polymerase catalyzes the transcription of DNA into RNA using the four ribonucleoside triphosphates as substrates. This chain is DNA-directed RNA polymerase subunit beta', found in Psychromonas ingrahamii (strain DSM 17664 / CCUG 51855 / 37).